The primary structure comprises 288 residues: Bifunctional protein FolD (288 aa).

NADP(+)-binding positions include 166 to 168 (GAS) and isoleucine 232.

The protein belongs to the tetrahydrofolate dehydrogenase/cyclohydrolase family. As to quaternary structure, homodimer.

The enzyme catalyses (6R)-5,10-methylene-5,6,7,8-tetrahydrofolate + NADP(+) = (6R)-5,10-methenyltetrahydrofolate + NADPH. It carries out the reaction (6R)-5,10-methenyltetrahydrofolate + H2O = (6R)-10-formyltetrahydrofolate + H(+). The protein operates within one-carbon metabolism; tetrahydrofolate interconversion. In terms of biological role, catalyzes the oxidation of 5,10-methylenetetrahydrofolate to 5,10-methenyltetrahydrofolate and then the hydrolysis of 5,10-methenyltetrahydrofolate to 10-formyltetrahydrofolate. The chain is Bifunctional protein FolD from Shigella dysenteriae serotype 1 (strain Sd197).